A 92-amino-acid chain; its full sequence is UPF0358 protein Exig_1994 (92 aa).

The protein belongs to the UPF0358 family.

This Exiguobacterium sibiricum (strain DSM 17290 / CCUG 55495 / CIP 109462 / JCM 13490 / 255-15) protein is UPF0358 protein Exig_1994.